A 352-amino-acid chain; its full sequence is MIFKKTILIFIISFFFISISFASSSSSSSSSSSSSSSSWSSSESSSSPAPSKYIYAIAVIENYKQQQFLIIDPWENNTILSESLQLNFEIDDILIVEESNTFIVYSESTNQSLISINPNTLQSKLINKITPPIAGFEDMLQPSVFISEKKVLYKPVVDINGGGELSSLLRLDFESGKGTFVNISNENQISTAGSIPNVAYDQLNDYVFACYNSSNNNVLVAFNETTSDIIETYGILKNIQGFDVTMMFTDKLGNLFLVYQDNSGDVFVCEVDSILMECFGVFKYNIGTVPYAFSPYFLSRDKSSLVFITYIDENQFLLEVVDFNHGFKSKKTIFSNSYLNNPFNVYWVSLTY.

Residues 1–22 (MIFKKTILIFIISFFFISISFA) form the signal peptide. The segment covering 25 to 47 (SSSSSSSSSSSSSSWSSSESSSS) has biased composition (low complexity). Residues 25 to 49 (SSSSSSSSSSSSSSWSSSESSSSPA) form a disordered region. Residues asparagine 76, asparagine 110, asparagine 182, asparagine 212, and asparagine 223 are each glycosylated (N-linked (GlcNAc...) asparagine).

Its subcellular location is the secreted. This is an uncharacterized protein from Dictyostelium discoideum (Social amoeba).